A 289-amino-acid polypeptide reads, in one-letter code: Small ribosomal subunit protein uS2C (289 aa).

It belongs to the universal ribosomal protein uS2 family. As to quaternary structure, component of the small ribosomal subunit. Mature ribosomes consist of a small (40S) and a large (60S) subunit. The 40S subunit contains about 33 different proteins and 1 molecule of RNA (18S). The 60S subunit contains about 49 different proteins and 3 molecules of RNA (25S, 5.8S and 5S). Interacts with rps21.

The protein resides in the cytoplasm. Required for the assembly and/or stability of the 40S ribosomal subunit. Required for the processing of the 20S rRNA-precursor to mature 18S rRNA in a late step of the maturation of 40S ribosomal subunits. In Schizosaccharomyces japonicus (strain yFS275 / FY16936) (Fission yeast), this protein is Small ribosomal subunit protein uS2C (rps0c).